Reading from the N-terminus, the 72-residue chain is Hypotensin (72 aa).

A signal peptide spans 1-24; it reads MKMMIAVFVSILLLMFSLSSTAMG. 2 consecutive propeptides follow at residues 25 to 35 and 61 to 72; these read METEQQNMEER and RFDPATFGENED.

The protein belongs to the non-disulfide-bridged peptide (NDBP) superfamily. As to expression, expressed by the venom gland.

It localises to the secreted. In terms of biological role, potentiates the hypotensive action of bradykinin (BK) in normotensive rats, and induces a vasorelaxant effect in mesenteric artery rings that is induced by endothelium-dependent release of nitric oxide (NO). Does not inhibit angiotensin converting enzyme (ACE). Shows neither hemolytic activity nor cytotoxicity to normal and cancer cells. Shows moderate antimicrobial activity against the fungi Candida albicans and the filamentous fungus Trichophyton rubrum, as well as against the bacteria C.albicans (MIC=128 ug/mL), C.tropicalis (MIC=128 ug/mL) and Aspergillus flavus (MIC=128 ug/mL). Has no antimicrobial activity against S.aureus, S.epidermidis and P.aeruginosa. The polypeptide is Hypotensin (Tityus stigmurus (Brazilian scorpion)).